Consider the following 238-residue polypeptide: MRIHGLILLSFLLLAAQVLSEKVRKTAKNVPDSTTEEDMSPSLGKARNKQRSRTSKSMTHGRFVTKDQATCRWAVTEEELGINLKVQCTRADQEFSCVFAGDPTGCLKYDKDQTYWKQVARTLRKQKNICENSKSVLKTRVCRKKFPESNLKVVNPRKEKAEVSPREHNKVQEAVSMEPNKVKVDITTSPAATVAVKDSECLEDPDVLTQRKTALEFCGESWSSFCTFFLNMLQATSC.

Residues 1-20 (MRIHGLILLSFLLLAAQVLS) form the signal peptide. A disordered region spans residues 25 to 61 (KTAKNVPDSTTEEDMSPSLGKARNKQRSRTSKSMTHG). 3 cysteine pairs are disulfide-bonded: C71–C88, C97–C130, and C106–C142. S164 carries an O-linked (GalNAc...) serine glycan. The segment at 197–238 (KDSECLEDPDVLTQRKTALEFCGESWSSFCTFFLNMLQATSC) is sufficient for interaction with FGF2 and FGF2-induced effects. 2 disulfides stabilise this stretch: C201–C238 and C218–C226.

The protein belongs to the fibroblast growth factor-binding protein family. As to quaternary structure, found in a complex with FGFBP1, FGF1 and FGF2. Interacts with FGF1, FGF2, FGF7, FGF10, FGF22 and HSPG2. In terms of tissue distribution, expressed in gut, eye, thymus, skin, lung, tongue, Purkinje cells and cerebral chorioid plexus (at protein level).

It is found in the secreted. It localises to the extracellular space. The protein resides in the cell membrane. Acts as a carrier protein that release fibroblast-binding factors (FGFs) from the extracellular matrix (EM) storage and thus enhance the mitogenic activity of FGFs. Enhances FGF2 signaling during tissue repair, angiogenesis and in tumor growth. This chain is Fibroblast growth factor-binding protein 1 (Fgfbp1), found in Rattus norvegicus (Rat).